The chain runs to 1329 residues: MLGNITPVSFFKTWVLKKTDVHVMISAREVFPCFIFRVFLLFQVFSRVHTLTNHANFEFEKSLSSCDKPCYNGVCLNKACVCSKGWYGSQCDHCFGRIRISDNASYISDGPLDYSPSAKCTWLIEPENSATPLKIRINSFFTECGWDYLYIYDGDSVYGKQLAALCGEQPSQEFTAASGKALVHFFSDLAINLNGFNVSYESNRCAYNCSNHGSCLNGKCDCEDGYKGLNCEYQVCQLSGKSTESPCHEGQCVDGRCECLSARVHGETCQMPVSSSVWDLIHPTNNAPTGKASHASIAIDDVVWSIGGEFFDGSSDPNNIDVYNVTSRIWSKVEVSGDMPKPRFDHTVVKYKNKLYMFGGVTKTQVRHQTTQAATNELWIFDMGSKKWAQQIHKNETIIAAPFAVAGHSAHVIRSEMFVIFGYNPLFGFMHHVQIYNFETEEWTVANTSDHVYGRFKHSAVEYTTPTGATAILVYGGSMWNNTITDSLMQFDTSTKKWSNLPQSGVQLYLHAAAYLNGLMVVVGGRGSNVTAGSKSECFSNMVQSYDVACKQWSNMSTAPVDLKRFGHSVHVIGQKLYALGGFNGKMKSDVWTLSPAKCSSATRPDECRLITDGTKCVFVDSSCVPFDPTVSYKSSFASMIKSSTPKSFDECTNTPLRLALKTCEEQTDCVSCASKSGCGWCSSGEQCLPNEQECVDGPGMLTSWEKCPQRNSVATMRPCNMENNCGSCRISPHCTWYPIDKASPCVSKEDLSPAFFLVHSRRKGKNRDPNQYQAADMSRVPRAAAFNSLAVVYEYETKSVLADRNKFLSPSHFPSFFRNATECPMPCAQRNNCSDCTDLEQCMWCPSTNRCINLEAYTLSFAYGQCHSWVTSGSGSVINRVCQAESVVCEEHKTCGECQRDPGCGWLADDSKTGLGLCIRGTSTGPLEPKPENSTWYFIDCPACQCNGHSTCFTSVGSFPPVTIEKCQSCQNHTTGAHCERCAPGFYGDARNGGVCSPCDCHHQADMCDPVSGQCFCKTKGVTGDRCDKCEAKYVGNPRNGTPCFYELAVDFIFTFKLRSDDKDNHTSEIYLYSVPYKKDTDVTFQISCESPKGNALVALNMTSSYVNGLADKSQAMMVDTICDSKGFRRVYVASDKGYPFGPDSNTTFFVRVYNFNTPVQIVVSFAQSPPINWVLFFVIFAACFIVLLVVAGLLWMIKVRIEAYRRNQRRIDEIEHMASRPFASTKMELSMLSQFSSAGGPTPLSIEPCSNYRAGVFTLAVRLPTGGKAVTPSGTSGLAVASSLCLLTPQQVGVLQAQDNGESNSGRKSNFRNLLRLTIRQRPNNND.

The 28-residue stretch at 65–92 folds into the EGF-like 1 domain; sequence SCDKPCYNGVCLNKACVCSKGWYGSQCD. 5 disulfide bridges follow: cysteine 66–cysteine 75, cysteine 70–cysteine 80, cysteine 82–cysteine 91, cysteine 94–cysteine 120, and cysteine 144–cysteine 166. Positions 94-203 constitute a CUB domain; sequence CFGRIRISDN…NGFNVSYESN (110 aa). N-linked (GlcNAc...) asparagine glycosylation occurs at asparagine 103. Asparagine 197 and asparagine 208 each carry an N-linked (GlcNAc...) asparagine glycan. 2 EGF-like domains span residues 204 to 232 and 235 to 270; these read RCAY…LNCE and VCQL…ETCQ. 6 cysteine pairs are disulfide-bonded: cysteine 205-cysteine 215, cysteine 209-cysteine 220, cysteine 222-cysteine 231, cysteine 236-cysteine 252, cysteine 247-cysteine 257, and cysteine 259-cysteine 269. Kelch repeat units lie at residues 302 to 353, 355 to 408, 416 to 463, 471 to 518, 520 to 575, and 577 to 619; these read VVWS…KYKN, LYMF…VAGH, EMFV…AVEY, AILV…YLNG, MVVV…VIGQ, and LYAL…KCVF. Asparagine 324, asparagine 395, asparagine 447, asparagine 481, asparagine 529, and asparagine 555 each carry an N-linked (GlcNAc...) asparagine glycan. Asparagine 820 is a glycosylation site (N-linked (GlcNAc...) asparagine). N-linked (GlcNAc...) asparagine; atypical glycosylation occurs at asparagine 832. Residues asparagine 833 and asparagine 934 are each glycosylated (N-linked (GlcNAc...) asparagine). Disulfide bonds link cysteine 945/cysteine 953, cysteine 947/cysteine 968, cysteine 971/cysteine 980, cysteine 983/cysteine 997, cysteine 1000/cysteine 1009, cysteine 1002/cysteine 1016, cysteine 1018/cysteine 1028, and cysteine 1031/cysteine 1045. 2 Laminin EGF-like domains span residues 945–999 and 1000–1047; these read CQCN…VCSP and CDCH…PCFY. Residues 952–998 form the EGF-like 4 domain; that stretch reads TCFTSVGSFPPVTIEKCQSCQNHTTGAHCERCAPGFYGDARNGGVCS. Residue asparagine 973 is glycosylated (N-linked (GlcNAc...) asparagine). Residues asparagine 1066, asparagine 1102, and asparagine 1147 are each glycosylated (N-linked (GlcNAc...) asparagine). A helical transmembrane segment spans residues 1176 to 1196; the sequence is VLFFVIFAACFIVLLVVAGLL. At 1197 to 1329 the chain is on the cytoplasmic side; that stretch reads WMIKVRIEAY…TIRQRPNNND (133 aa).

Its subcellular location is the membrane. The chain is Putative protein tag-53 (tag-53) from Caenorhabditis elegans.